The sequence spans 203 residues: ATP-dependent Clp protease proteolytic subunit (203 aa).

S98 acts as the Nucleophile in catalysis. H123 is a catalytic residue.

This sequence belongs to the peptidase S14 family. As to quaternary structure, fourteen ClpP subunits assemble into 2 heptameric rings which stack back to back to give a disk-like structure with a central cavity, resembling the structure of eukaryotic proteasomes.

It is found in the cytoplasm. It catalyses the reaction Hydrolysis of proteins to small peptides in the presence of ATP and magnesium. alpha-casein is the usual test substrate. In the absence of ATP, only oligopeptides shorter than five residues are hydrolyzed (such as succinyl-Leu-Tyr-|-NHMec, and Leu-Tyr-Leu-|-Tyr-Trp, in which cleavage of the -Tyr-|-Leu- and -Tyr-|-Trp bonds also occurs).. Cleaves peptides in various proteins in a process that requires ATP hydrolysis. Has a chymotrypsin-like activity. Plays a major role in the degradation of misfolded proteins. The sequence is that of ATP-dependent Clp protease proteolytic subunit from Desulfotalea psychrophila (strain LSv54 / DSM 12343).